Consider the following 32-residue polypeptide: MSDIN-like toxin proprotein 3 (32 aa).

A propeptide spanning residues 1–10 (MSDINATRLP) is cleaved from the precursor. The cyclopeptide (Val-Pro) cross-link spans 11 to 17 (VWIGYSP). The propeptide occupies 18–32 (CVGDDAVALLNRGEG).

The protein belongs to the MSDIN fungal toxin family. Processed by the macrocyclase-peptidase enzyme POPB to yield a toxic cyclic heptapeptide. POPB first removes 10 residues from the N-terminus. Conformational trapping of the remaining peptide forces the enzyme to release this intermediate rather than proceed to macrocyclization. The enzyme rebinds the remaining peptide in a different conformation and catalyzes macrocyclization of the N-terminal 7 residues.

Probable toxin that belongs to the MSDIN-like toxin family responsible for a large number of food poisoning cases and deaths. The chain is MSDIN-like toxin proprotein 3 from Amanita fuligineoides.